The sequence spans 105 residues: Large ribosomal subunit protein uL24 (105 aa).

This sequence belongs to the universal ribosomal protein uL24 family. In terms of assembly, part of the 50S ribosomal subunit.

One of two assembly initiator proteins, it binds directly to the 5'-end of the 23S rRNA, where it nucleates assembly of the 50S subunit. In terms of biological role, one of the proteins that surrounds the polypeptide exit tunnel on the outside of the subunit. This Mycobacterium avium (strain 104) protein is Large ribosomal subunit protein uL24.